The following is an 803-amino-acid chain: Elongation factor G, mitochondrial (803 aa).

A mitochondrion-targeting transit peptide spans 1 to 24; that stretch reads MVRPAQVRAFSGLARSATSTRLIP. A tr-type G domain is found at 102 to 388; the sequence is SKVRNIGIAA…GVCDYLPNPS (287 aa). Residues 111–118, 186–190, and 240–243 contribute to the GTP site; these read AHIDSGKT, DTPGH, and NKMD.

The protein belongs to the TRAFAC class translation factor GTPase superfamily. Classic translation factor GTPase family. EF-G/EF-2 subfamily.

The protein localises to the mitochondrion. Its pathway is protein biosynthesis; polypeptide chain elongation. Functionally, mitochondrial GTPase that catalyzes the GTP-dependent ribosomal translocation step during translation elongation. During this step, the ribosome changes from the pre-translocational (PRE) to the post-translocational (POST) state as the newly formed A-site-bound peptidyl-tRNA and P-site-bound deacylated tRNA move to the P and E sites, respectively. Catalyzes the coordinated movement of the two tRNA molecules, the mRNA and conformational changes in the ribosome. The chain is Elongation factor G, mitochondrial (mef1) from Talaromyces marneffei (strain ATCC 18224 / CBS 334.59 / QM 7333) (Penicillium marneffei).